Consider the following 854-residue polypeptide: A-kinase anchor protein 4 (854 aa).

Positions 1-188 (MMAYSDTTMM…MTAAKNTNNN (188 aa)) are excised as a propeptide. Phosphoserine occurs at positions 96, 130, 190, 213, 226, and 272. The segment at 184–207 (NTNNNQSPSAPPAKPPSTQRAVIS) is disordered. The PKA-RI and PKA-RII subunit binding domain stretch occupies residues 219–232 (FYVNRLSSLVIQMA). The segment at 287 to 323 (RGTGEESREGGQKSFLYSELSNKSKSGDKQMSQRESK) is disordered. Residues 288–297 (GTGEESREGG) are compositionally biased toward basic and acidic residues. A Phosphoserine modification is found at Ser300. Tyr303 carries the post-translational modification Phosphotyrosine. Ser304 and Ser307 each carry phosphoserine. A compositionally biased stretch (basic and acidic residues) spans 311–323 (KSGDKQMSQRESK). The tract at residues 336 to 345 (YANQVASDMM) is PKA-RI-alpha subunit binding domain. A phosphoserine mark is found at Ser342, Ser432, Ser443, Ser445, Ser447, Ser450, Ser464, and Ser492. Thr506 bears the Phosphothreonine mark. Phosphoserine is present on residues Ser536, Ser581, Ser627, and Ser703.

The protein belongs to the AKAP110 family. Interacts with PRKAR1A and PRKAR2A. Interacts with ENO4. Interacts with QRICH2. Post-translationally, phosphorylated by STK33 during sperm flagella assembly. Testis specific; only expressed in round spermatids.

The protein localises to the cell projection. It localises to the cilium. It is found in the flagellum. Functionally, major structural component of sperm fibrous sheath. Plays a role in sperm motility. The chain is A-kinase anchor protein 4 from Homo sapiens (Human).